Here is a 435-residue protein sequence, read N- to C-terminus: DEAD-box ATP-dependent RNA helicase CshB (435 aa).

The Q motif motif lies at 5–33 (SRFDQFGFQPFIGLAIDKLGFYEPTEVQQ). Residues 36–208 (IPGILKGESI…SKYMENPRYE (173 aa)) enclose the Helicase ATP-binding domain. Residue 49–56 (SQTGTGKT) participates in ATP binding. Residues 156-159 (DEAD) carry the DEAD box motif. In terms of domain architecture, Helicase C-terminal spans 235–378 (LLKNVLVGSQ…HVDWKNKEFV (144 aa)). Residues 383–435 (RNRRAKREAKRETADPREIGMRKKAKQKGKPNYKKKINYKMNEIKRRERRKKR) form a disordered region. Residues 391–403 (AKRETADPREIGM) show a composition bias toward basic and acidic residues. Basic residues predominate over residues 404 to 420 (RKKAKQKGKPNYKKKIN).

This sequence belongs to the DEAD box helicase family. CshB subfamily.

It localises to the cytoplasm. The enzyme catalyses ATP + H2O = ADP + phosphate + H(+). DEAD-box RNA helicase involved in cold tolerance, motility, and tolerance to heat, alkali and oxidative stress. The chain is DEAD-box ATP-dependent RNA helicase CshB from Listeria monocytogenes serovar 1/2a (strain ATCC BAA-679 / EGD-e).